Consider the following 375-residue polypeptide: Probable disease resistance protein At1g52660 (375 aa).

The 215-residue stretch at 158–372 (ENTGIIGLYG…LSNSPPNFSG (215 aa)) folds into the NB-ARC domain. 167 to 174 (GVEGVGKT) provides a ligand contact to ATP.

Possible disease resistance protein. In Arabidopsis thaliana (Mouse-ear cress), this protein is Probable disease resistance protein At1g52660.